We begin with the raw amino-acid sequence, 386 residues long: MSKVENKTKKLRVFEAFAGIGAQRKALEKVRKDEYEIVGLAEWYVPAIVMYQAIHNNFHTKLEYKSVSREEMIDYLENKTLSWNSKNPVSNGYWKRKKDDELKIIYNAIKLSEKEGNIFDIRDLYKRTLKNIDLLTYSFPCQDLSQQGIQKGMKRGSGTRSGLLWEIERALDSTEKNDLPKYLLMENVGALLHKKNEEELNQWKQKLESLGYQNSIEVLNAADFGSSQARRRVFMISTLNEFVELPKGDKKPKSIKKVLNKIVSEKDILNNLLKYNLTEFKKTKSNINKASLIGYSKFNSEGYVYDPEFTGPTLTASGANSRIKIKDGSNIRKMNSDETFLYIGFDSQDGKRVNEIEFLTENQKIFVCGNSISVEVLEAIIDKIGG.

The 376-residue stretch at 11–386 (LRVFEAFAGI…LEAIIDKIGG (376 aa)) folds into the SAM-dependent MTase C5-type domain. Residue Cys141 is part of the active site.

Belongs to the class I-like SAM-binding methyltransferase superfamily. C5-methyltransferase family.

It catalyses the reaction a 2'-deoxycytidine in DNA + S-adenosyl-L-methionine = a 5-methyl-2'-deoxycytidine in DNA + S-adenosyl-L-homocysteine + H(+). Functionally, this de novo methylase acts completely and exclusively on CG residues in DNA; methylates unmethylated and hemi-methylated DNA. In Spiroplasma monobiae (strain ATCC 33825 / MQ-1), this protein is Orphan methyltransferase M.SssI (sssIM).